Reading from the N-terminus, the 1953-residue chain is Protein BNI1 (1953 aa).

4 disordered regions span residues 1-152 (MLKN…ASSL), 230-258 (MRAN…ANSS), 263-282 (KSVL…SNSL), and 287-306 (TLSS…SGSL). Positions 31-40 (ANSNATNSNT) are enriched in low complexity. Composition is skewed to polar residues over residues 41–100 (GSPT…SQYM) and 110–143 (VSSQ…RQHT). The 523-residue stretch at 174–696 (EMPSDPYEVE…NVSVASTSDE (523 aa)) folds into the GBD/FH3 domain. The span at 232–246 (ANTTSSSTASRTSMA) shows a compositional bias: low complexity. The span at 263-278 (KSVLMTSASSPTSTVY) shows a compositional bias: polar residues. Residues Ser311 and Ser325 each carry the phosphoserine modification. Residues 312-337 (LNNIYRGGAENNTSASTLPGDRTNRP) form a disordered region. 3 coiled-coil regions span residues 712–807 (QTDE…TILN), 864–894 (NKRL…EFEK), and 928–981 (NKLN…YKGF). 3 disordered regions span residues 990–1014 (IMDS…SLDP), 1040–1094 (HEIQ…LDAL), and 1149–1330 (TQKV…MPAS). In terms of domain architecture, FH1 spans 1053 to 1337 (SSSSSDDESE…PASQIKSAVT (285 aa)). Residues Ser1085 and Ser1170 each carry the phosphoserine modification. Residues 1184 to 1211 (DKAEKDMRQHVENGKQGRVVNHEEDKTA) show a composition bias toward basic and acidic residues. Residues 1217-1237 (SKLNNTDGAEDLSTQSSVLSS) are compositionally biased toward polar residues. Pro residues predominate over residues 1238–1250 (QPPPPPPPPPPVP). Residues 1257–1270 (SLEKEKKSEDDTVK) are compositionally biased toward basic and acidic residues. The span at 1278–1292 (PAPPPPPPPPPPPPM) shows a compositional bias: pro residues. Residues Ser1338 and Ser1344 each carry the phosphoserine modification. The region spanning 1348–1766 (FEKYPRPHKK…YIKHKKIVEE (419 aa)) is the FH2 domain. Positions 1732–1811 (KFADFINEYK…DKLLEQLKNA (80 aa)) form a coiled coil. Residues 1768-1779 (QKRAQEKEKQKE) are compositionally biased toward basic and acidic residues. 3 disordered regions span residues 1768–1797 (QKRA…AEDR), 1809–1844 (KNAG…LLND), and 1872–1899 (PTPL…LEDQ). One can recognise a DAD domain in the interval 1792–1826 (DEAEDRRAVMDKLLEQLKNAGPAKSDPSSARKRAL). Residues 1821-1830 (ARKRALVRKK) are compositionally biased toward basic residues. Over residues 1880 to 1896 (VMNTSEDLPSPSKTSAL) the composition is skewed to polar residues. Thr1918 is modified (phosphothreonine).

It belongs to the formin homology family. BNI1 subfamily. In terms of assembly, homodimer, and possibly also homotetramer. Interacts with PFY1 via the FH1 domain and with actin via the FH2 domain.

It localises to the cell membrane. The protein resides in the cell projection. The protein localises to the ruffle membrane. Its subcellular location is the cytoplasm. It is found in the cytoskeleton. In terms of biological role, required for the assembly of F-actin structures, such as actin cables and stress fibers. Nucleates actin filaments. Binds to the barbed end of the actin filament and acts as a leaky capper, slowing both polymerization and depolymerization. Protects the growing actin fiber from tight capping proteins and so increases the time of elongation and the total amount of F-actin. May organize microtubules by mediating spindle positioning and movement in the budding process. Potential target of the RHO family members. This chain is Protein BNI1 (BNI1), found in Saccharomyces cerevisiae (strain ATCC 204508 / S288c) (Baker's yeast).